Reading from the N-terminus, the 194-residue chain is Adenylate kinase (194 aa).

Position 10–15 (10–15) interacts with ATP; the sequence is GAGKGT. Positions 30-59 are NMP; it reads STGDMLRAAVAQQSEIGKRAKAVMDAGQLV. AMP contacts are provided by residues threonine 31, arginine 36, 57–59, 85–88, and glutamine 92; these read QLV and GYPR. An LID region spans residues 126–142; the sequence is SRVAETIAKGAQVRSDD. Arginine 127 is an ATP binding site. Residues arginine 139 and arginine 150 each contribute to the AMP site. Position 178 (alanine 178) interacts with ATP.

The protein belongs to the adenylate kinase family. Monomer.

The protein localises to the cytoplasm. The enzyme catalyses AMP + ATP = 2 ADP. Its pathway is purine metabolism; AMP biosynthesis via salvage pathway; AMP from ADP: step 1/1. Catalyzes the reversible transfer of the terminal phosphate group between ATP and AMP. Plays an important role in cellular energy homeostasis and in adenine nucleotide metabolism. This chain is Adenylate kinase, found in Brucella melitensis biotype 1 (strain ATCC 23456 / CCUG 17765 / NCTC 10094 / 16M).